Consider the following 440-residue polypeptide: Ribosomal protein uS12 methylthiotransferase RimO (440 aa).

The MTTase N-terminal domain occupies 6 to 116 (PKVGFVSLGC…VVSAVHEVVP (111 aa)). [4Fe-4S] cluster contacts are provided by Cys-15, Cys-51, Cys-80, Cys-149, Cys-153, and Cys-156. The Radical SAM core domain occupies 135–374 (LTPRHYAYLK…AHQQAISSAR (240 aa)). Residues 376 to 440 (QAKIGLEMDV…DEYDMWGELV (65 aa)) form the TRAM domain.

This sequence belongs to the methylthiotransferase family. RimO subfamily. Requires [4Fe-4S] cluster as cofactor.

The protein resides in the cytoplasm. It carries out the reaction L-aspartate(89)-[ribosomal protein uS12]-hydrogen + (sulfur carrier)-SH + AH2 + 2 S-adenosyl-L-methionine = 3-methylsulfanyl-L-aspartate(89)-[ribosomal protein uS12]-hydrogen + (sulfur carrier)-H + 5'-deoxyadenosine + L-methionine + A + S-adenosyl-L-homocysteine + 2 H(+). Catalyzes the methylthiolation of an aspartic acid residue of ribosomal protein uS12. The polypeptide is Ribosomal protein uS12 methylthiotransferase RimO (Ectopseudomonas mendocina (strain ymp) (Pseudomonas mendocina)).